Here is a 454-residue protein sequence, read N- to C-terminus: tRNA modification GTPase MnmE (454 aa).

(6S)-5-formyl-5,6,7,8-tetrahydrofolate contacts are provided by arginine 23, glutamate 80, and lysine 120. The 162-residue stretch at 216-377 (GMKVVIAGRP…LRNHLKQSMG (162 aa)) folds into the TrmE-type G domain. Asparagine 226 is a binding site for K(+). GTP-binding positions include 226-231 (NAGKSS), 245-251 (TDIAGTT), 270-273 (DTAG), and 335-338 (NKAD). Residue serine 230 participates in Mg(2+) binding. K(+) is bound by residues threonine 245, isoleucine 247, and threonine 250. A Mg(2+)-binding site is contributed by threonine 251. Lysine 454 is a binding site for (6S)-5-formyl-5,6,7,8-tetrahydrofolate.

Belongs to the TRAFAC class TrmE-Era-EngA-EngB-Septin-like GTPase superfamily. TrmE GTPase family. As to quaternary structure, homodimer. Heterotetramer of two MnmE and two MnmG subunits. It depends on K(+) as a cofactor.

Its subcellular location is the cytoplasm. Its function is as follows. Exhibits a very high intrinsic GTPase hydrolysis rate. Involved in the addition of a carboxymethylaminomethyl (cmnm) group at the wobble position (U34) of certain tRNAs, forming tRNA-cmnm(5)s(2)U34. This chain is tRNA modification GTPase MnmE, found in Escherichia coli O157:H7.